The sequence spans 339 residues: DNA-directed RNA polymerase subunit alpha (339 aa).

Residues 1–233 form an alpha N-terminal domain (alpha-NTD) region; the sequence is MVREKVRIST…DLFIPFLHAE (233 aa). Residues 267–339 form an alpha C-terminal domain (alpha-CTD) region; the sequence is IALKSIFIDQ…FTINLPKNKF (73 aa).

The protein belongs to the RNA polymerase alpha chain family. In plastids the minimal PEP RNA polymerase catalytic core is composed of four subunits: alpha, beta, beta', and beta''. When a (nuclear-encoded) sigma factor is associated with the core the holoenzyme is formed, which can initiate transcription.

The protein localises to the plastid. The protein resides in the chloroplast. It carries out the reaction RNA(n) + a ribonucleoside 5'-triphosphate = RNA(n+1) + diphosphate. Its function is as follows. DNA-dependent RNA polymerase catalyzes the transcription of DNA into RNA using the four ribonucleoside triphosphates as substrates. The polypeptide is DNA-directed RNA polymerase subunit alpha (Populus alba (White poplar)).